The sequence spans 274 residues: Protein A11 homolog (274 aa).

Positions D106 to N136 form a coiled coil.

The protein belongs to the poxviridae A11 family. Homomultimer. Interacts with A32. Phosphorylated by a F10-independent mechanism.

The protein resides in the host cytoplasm. Required for viral crescent formation early during virus morphogenesis. This is Protein A11 homolog from Fowlpox virus (strain NVSL) (FPV).